Here is a 413-residue protein sequence, read N- to C-terminus: Pyruvate dehydrogenase complex subunit homolog DDB_G0271564, mitochondrial (413 aa).

Residues 1–19 (MNRILKQVSNTKGKGIRFY) constitute a mitochondrion transit peptide. Residues 29 to 67 (YMFPSVRRLLVEYGINSSKEVTATGPQNRLLKGDVLAYI) form the Peripheral subunit-binding (PSBD) domain.

This sequence belongs to the 2-oxoacid dehydrogenase family.

Its subcellular location is the mitochondrion. Functionally, the pyruvate dehydrogenase complex catalyzes the overall conversion of pyruvate to acetyl-CoA and CO(2). It contains multiple copies of three enzymatic components: pyruvate dehydrogenase (E1), dihydrolipoamide acetyltransferase (E2) and lipoamide dehydrogenase (E3). The polypeptide is Pyruvate dehydrogenase complex subunit homolog DDB_G0271564, mitochondrial (pdhX) (Dictyostelium discoideum (Social amoeba)).